Here is a 311-residue protein sequence, read N- to C-terminus: Transcriptional regulatory protein MoaR1 (311 aa).

Residues 15 to 117 (LNATTAGAVQ…SEPPGYRLLI (103 aa)) constitute a DNA-binding region (ompR/PhoB-type).

This sequence belongs to the AfsR/DnrI/RedD regulatory family.

Functionally, acts as a positive transcriptional regulator of the molybdopterin biosynthesis moa1 locus, promoting the expression of the moaA1B1C1D1 genes. Binds directly to the moaA1 promoter. This is Transcriptional regulatory protein MoaR1 (moaR1) from Mycobacterium tuberculosis (strain ATCC 25618 / H37Rv).